The primary structure comprises 191 residues: Thymidylate kinase (191 aa).

Residue 7–14 (GIDTCGKS) coordinates ATP.

This sequence belongs to the thymidylate kinase family.

The enzyme catalyses dTMP + ATP = dTDP + ADP. Phosphorylation of dTMP to form dTDP in both de novo and salvage pathways of dTTP synthesis. The chain is Thymidylate kinase from Sulfurovum sp. (strain NBC37-1).